We begin with the raw amino-acid sequence, 217 residues long: Adenylate kinase (217 aa).

ATP is bound at residue 10 to 15 (GAGKGT). Residues 30-59 (STGDIFRQNLRDNTDLGKLAKEYMDKGLLV) form an NMP region. Residues threonine 31, arginine 36, 57-59 (LLV), 85-88 (GYPR), and glutamine 92 contribute to the AMP site. Residues 126 to 163 (GRRVCPNCGATYHIKTSPPAVDNVCDKCGAQLIQRSDD) form an LID region. ATP is bound at residue arginine 127. Residues cysteine 130 and cysteine 133 each coordinate Zn(2+). 136-137 (TY) is a binding site for ATP. Residues cysteine 150 and cysteine 153 each contribute to the Zn(2+) site. 2 residues coordinate AMP: arginine 160 and arginine 171. Lysine 199 provides a ligand contact to ATP.

Belongs to the adenylate kinase family. In terms of assembly, monomer.

The protein localises to the cytoplasm. The catalysed reaction is AMP + ATP = 2 ADP. It participates in purine metabolism; AMP biosynthesis via salvage pathway; AMP from ADP: step 1/1. In terms of biological role, catalyzes the reversible transfer of the terminal phosphate group between ATP and AMP. Plays an important role in cellular energy homeostasis and in adenine nucleotide metabolism. The sequence is that of Adenylate kinase from Thermoanaerobacter pseudethanolicus (strain ATCC 33223 / 39E) (Clostridium thermohydrosulfuricum).